A 178-amino-acid chain; its full sequence is CASP-like protein 5A1 (178 aa).

Residues 1–11 (MFASRPAVHPV) are compositionally biased toward low complexity. A disordered region spans residues 1 to 25 (MFASRPAVHPVEAPPPPDPAEQPRG). Residues 1 to 37 (MFASRPAVHPVEAPPPPDPAEQPRGVLMKDLPGMPGT) are Cytoplasmic-facing. The helical transmembrane segment at 38–58 (AGGLGLRLAQFAFAAVALAVM) threads the bilayer. Topologically, residues 59–69 (ASTNDFPSVTS) are extracellular. The helical transmembrane segment at 70–90 (FCFLVAAAILQCLWSFSLAIV) threads the bilayer. Over 91-105 (DIYALLVKRCLRNRR) the chain is Cytoplasmic. Residues 106–126 (AVCLFAIGDGITAALTFSAAC) traverse the membrane as a helical segment. Over 127 to 152 (ASSGITVLIDNDLDLCSENHCASFES) the chain is Extracellular. Residues 153–173 (ATAMAFLSWFALSPSFLLNFW) form a helical membrane-spanning segment. Topologically, residues 174-178 (SMASG) are cytoplasmic.

Belongs to the Casparian strip membrane proteins (CASP) family. In terms of assembly, homodimer and heterodimers.

It is found in the cell membrane. In Oryza sativa subsp. japonica (Rice), this protein is CASP-like protein 5A1.